The primary structure comprises 420 residues: Ribosome biogenesis protein WDR12 homolog (420 aa).

The interval 10–92 (VQVHLKTKQE…EDAIEIEYVE (83 aa)) is ubiquitin-like (UBL) domain. 7 WD repeats span residues 104–142 (LHDD…LTIS), 143–185 (GHTA…NAVD), 192–231 (GHER…GVEG), 250–288 (GHRE…IKTE), 290–329 (STNK…GSVV), 335–375 (GHNA…APLY), and 379–417 (GHGD…AEDT).

Belongs to the WD repeat WDR12/YTM1 family.

It localises to the nucleus. The protein localises to the nucleolus. The protein resides in the nucleoplasm. In terms of biological role, required for maturation of ribosomal RNAs and formation of the large ribosomal subunit. This chain is Ribosome biogenesis protein WDR12 homolog, found in Drosophila simulans (Fruit fly).